The chain runs to 203 residues: Guanylate kinase (203 aa).

Positions 3–181 constitute a Guanylate kinase-like domain; the sequence is GTLYVVSAPS…TLADLQAIFT (179 aa). 10 to 17 serves as a coordination point for ATP; the sequence is APSGAGKT.

It belongs to the guanylate kinase family.

Its subcellular location is the cytoplasm. It catalyses the reaction GMP + ATP = GDP + ADP. Functionally, essential for recycling GMP and indirectly, cGMP. This chain is Guanylate kinase, found in Alkalilimnicola ehrlichii (strain ATCC BAA-1101 / DSM 17681 / MLHE-1).